The primary structure comprises 157 residues: Probable intracellular pathogenesis-related protein T1 (157 aa).

N-linked (GlcNAc...) asparagine glycosylation is found at N79 and N117.

The protein belongs to the BetVI family.

The sequence is that of Probable intracellular pathogenesis-related protein T1 (PCKR3) from Catharanthus roseus (Madagascar periwinkle).